The primary structure comprises 181 residues: Large ribosomal subunit protein uL5 (181 aa).

It belongs to the universal ribosomal protein uL5 family. Part of the 50S ribosomal subunit; part of the 5S rRNA/L5/L18/L25 subcomplex. Contacts the 5S rRNA and the P site tRNA. Forms a bridge to the 30S subunit in the 70S ribosome.

In terms of biological role, this is one of the proteins that bind and probably mediate the attachment of the 5S RNA into the large ribosomal subunit, where it forms part of the central protuberance. In the 70S ribosome it contacts protein S13 of the 30S subunit (bridge B1b), connecting the 2 subunits; this bridge is implicated in subunit movement. Contacts the P site tRNA; the 5S rRNA and some of its associated proteins might help stabilize positioning of ribosome-bound tRNAs. The sequence is that of Large ribosomal subunit protein uL5 from Helicobacter hepaticus (strain ATCC 51449 / 3B1).